Reading from the N-terminus, the 403-residue chain is Phosphopentomutase (403 aa).

Positions 13, 298, 303, 339, 340, and 351 each coordinate Mn(2+).

This sequence belongs to the phosphopentomutase family. Mn(2+) serves as cofactor.

Its subcellular location is the cytoplasm. It carries out the reaction 2-deoxy-alpha-D-ribose 1-phosphate = 2-deoxy-D-ribose 5-phosphate. It catalyses the reaction alpha-D-ribose 1-phosphate = D-ribose 5-phosphate. Its pathway is carbohydrate degradation; 2-deoxy-D-ribose 1-phosphate degradation; D-glyceraldehyde 3-phosphate and acetaldehyde from 2-deoxy-alpha-D-ribose 1-phosphate: step 1/2. Functionally, isomerase that catalyzes the conversion of deoxy-ribose 1-phosphate (dRib-1-P) and ribose 1-phosphate (Rib-1-P) to deoxy-ribose 5-phosphate (dRib-5-P) and ribose 5-phosphate (Rib-5-P), respectively. The sequence is that of Phosphopentomutase from Streptococcus pneumoniae serotype 4 (strain ATCC BAA-334 / TIGR4).